Consider the following 353-residue polypeptide: Basic membrane protein C (353 aa).

Residues 1-16 (MFKRFIFITLSLLVFA) form the signal peptide. Cys17 is lipidated: N-palmitoyl cysteine. The S-diacylglycerol cysteine moiety is linked to residue Cys17.

Belongs to the BMP lipoprotein family. As to quaternary structure, monomer.

The protein localises to the cell inner membrane. Functionally, may be part of an ABC-type nucleoside uptake system involved in the purine salvage pathway. The polypeptide is Basic membrane protein C (bmpC) (Borreliella burgdorferi (strain ATCC 35210 / DSM 4680 / CIP 102532 / B31) (Borrelia burgdorferi)).